We begin with the raw amino-acid sequence, 378 residues long: Dihydroorotate dehydrogenase (quinone) (378 aa).

FMN-binding positions include Ala77–Lys81 and Thr101. Lys81 contributes to the substrate binding site. Asn126–Phe130 is a binding site for substrate. Asn158 and Asn191 together coordinate FMN. Residue Asn191 coordinates substrate. Residue Ser194 is the Nucleophile of the active site. Asn196 is a substrate binding site. 2 residues coordinate FMN: Lys229 and Thr257. Residue Asn258–Thr259 participates in substrate binding. FMN-binding positions include Gly287, Gly316, and Tyr337–Thr338.

Belongs to the dihydroorotate dehydrogenase family. Type 2 subfamily. As to quaternary structure, monomer. It depends on FMN as a cofactor.

Its subcellular location is the cell membrane. It catalyses the reaction (S)-dihydroorotate + a quinone = orotate + a quinol. Its pathway is pyrimidine metabolism; UMP biosynthesis via de novo pathway; orotate from (S)-dihydroorotate (quinone route): step 1/1. Its function is as follows. Catalyzes the conversion of dihydroorotate to orotate with quinone as electron acceptor. This Synechococcus sp. (strain ATCC 27144 / PCC 6301 / SAUG 1402/1) (Anacystis nidulans) protein is Dihydroorotate dehydrogenase (quinone).